Here is a 431-residue protein sequence, read N- to C-terminus: Adenylosuccinate synthetase (431 aa).

GTP-binding positions include 13 to 19 and 41 to 43; these read GDEGKGK and GHT. Asp14 acts as the Proton acceptor in catalysis. Positions 14 and 41 each coordinate Mg(2+). Residues 14-17, 39-42, Thr130, Arg144, Gln225, Thr240, and Arg306 contribute to the IMP site; these read DEGK and NAGH. Residue His42 is the Proton donor of the active site. A substrate-binding site is contributed by 302-308; the sequence is ATTGRQR. Residues Arg308, 334–336, and 416–418 contribute to the GTP site; these read KLD and STG.

It belongs to the adenylosuccinate synthetase family. In terms of assembly, homodimer. Mg(2+) serves as cofactor.

The protein localises to the cytoplasm. The enzyme catalyses IMP + L-aspartate + GTP = N(6)-(1,2-dicarboxyethyl)-AMP + GDP + phosphate + 2 H(+). Its pathway is purine metabolism; AMP biosynthesis via de novo pathway; AMP from IMP: step 1/2. Its function is as follows. Plays an important role in the de novo pathway of purine nucleotide biosynthesis. Catalyzes the first committed step in the biosynthesis of AMP from IMP. The chain is Adenylosuccinate synthetase from Halorhodospira halophila (strain DSM 244 / SL1) (Ectothiorhodospira halophila (strain DSM 244 / SL1)).